An 89-amino-acid chain; its full sequence is NADH-ubiquinone oxidoreductase chain 4L (89 aa).

Helical transmembrane passes span 1–21 (MNLSLILFLIGILGFVLNRKN), 22–42 (IILMLISIEIILLSVTFLILI), and 55–75 (FAIYIITIAGAESAIGLGILV).

This sequence belongs to the complex I subunit 4L family.

The protein localises to the mitochondrion membrane. The catalysed reaction is a ubiquinone + NADH + 5 H(+)(in) = a ubiquinol + NAD(+) + 4 H(+)(out). Functionally, core subunit of the mitochondrial membrane respiratory chain NADH dehydrogenase (Complex I) that is believed to belong to the minimal assembly required for catalysis. Complex I functions in the transfer of electrons from NADH to the respiratory chain. The immediate electron acceptor for the enzyme is believed to be ubiquinone. The sequence is that of NADH-ubiquinone oxidoreductase chain 4L (ND4L) from Trichophyton rubrum (Athlete's foot fungus).